The following is a 396-amino-acid chain: Elongation factor Tu (396 aa).

Residues 10-205 (KPHVNIGTIG…AVDESIPDPV (196 aa)) form the tr-type G domain. Residues 19 to 26 (GHVDHGKT) are G1. Residue 19 to 26 (GHVDHGKT) coordinates GTP. Mg(2+) is bound at residue T26. A G2 region spans residues 62–66 (GITIN). Residues 83–86 (DAPG) form a G3 region. Residues 83-87 (DAPGH) and 138-141 (NKAD) each bind GTP. The segment at 138-141 (NKAD) is G4. Residues 175-177 (SAL) form a G5 region.

Belongs to the TRAFAC class translation factor GTPase superfamily. Classic translation factor GTPase family. EF-Tu/EF-1A subfamily. As to quaternary structure, monomer.

The protein resides in the cytoplasm. It catalyses the reaction GTP + H2O = GDP + phosphate + H(+). GTP hydrolase that promotes the GTP-dependent binding of aminoacyl-tRNA to the A-site of ribosomes during protein biosynthesis. This Mycolicibacterium gilvum (strain PYR-GCK) (Mycobacterium gilvum (strain PYR-GCK)) protein is Elongation factor Tu.